A 370-amino-acid chain; its full sequence is MLKIGRNATILKNNFWFASVRFQSGGFSEKLAKGPSFADFLNMDKPLTADEAFELDRKVELPNGSIHKRLPSWLKTKVPLGTNFNRIKHDLRGSHLHTVCEEAKCPNIGECWGGKDKSRATATIMLMGDTCTRGCRFCSVKTSRRPGPLDPNEPENTAEAIKQWNLGYIVLTSVDRDDLTDLGANHIAKTIQKIKEKAPHILVEALTPDFSGRMDLVEIVAKSGLDVFAHNVETVEELTPFVRDRRATYRQSLSVLKHVKKTCPHLITKTSIMLGLGETDAEILTTLKDLLEHNVDVVTFGQYMRPTKRHLKVQEYVHPKKFEYWKEVAEKLGFLYVASGPLVRSSYKAGEYFMENLIKKRSGNPASMSV.

[4Fe-4S] cluster is bound by residues cysteine 100, cysteine 105, cysteine 111, cysteine 131, cysteine 135, cysteine 138, and serine 346. The region spanning 116–335 is the Radical SAM core domain; the sequence is DKSRATATIM…KEVAEKLGFL (220 aa).

This sequence belongs to the radical SAM superfamily. Lipoyl synthase family. The cofactor is [4Fe-4S] cluster.

The protein resides in the mitochondrion. It catalyses the reaction [[Fe-S] cluster scaffold protein carrying a second [4Fe-4S](2+) cluster] + N(6)-octanoyl-L-lysyl-[protein] + 2 oxidized [2Fe-2S]-[ferredoxin] + 2 S-adenosyl-L-methionine + 4 H(+) = [[Fe-S] cluster scaffold protein] + N(6)-[(R)-dihydrolipoyl]-L-lysyl-[protein] + 4 Fe(3+) + 2 hydrogen sulfide + 2 5'-deoxyadenosine + 2 L-methionine + 2 reduced [2Fe-2S]-[ferredoxin]. It participates in protein modification; protein lipoylation via endogenous pathway; protein N(6)-(lipoyl)lysine from octanoyl-[acyl-carrier-protein]: step 2/2. Its function is as follows. Catalyzes the radical-mediated insertion of two sulfur atoms into the C-6 and C-8 positions of the octanoyl moiety bound to the lipoyl domains of lipoate-dependent enzymes, thereby converting the octanoylated domains into lipoylated derivatives. This chain is Lipoyl synthase, mitochondrial (lip5), found in Schizosaccharomyces pombe (strain 972 / ATCC 24843) (Fission yeast).